Reading from the N-terminus, the 565-residue chain is Periplasmic trehalase (565 aa).

The N-terminal stretch at 1–30 (MKSPAPSRPQKMALIPACIFLYFAALSVQA) is a signal peptide. Substrate contacts are provided by residues Arg152, 159–160 (WD), Asn196, 205–207 (RSQ), 277–279 (RPE), and Gly310. Catalysis depends on proton donor/acceptor residues Asp312 and Glu496. Glu511 is a binding site for substrate. A disordered region spans residues 540-565 (DNVPATHPTVKSATTQPSTKEAQPTP). Over residues 548–565 (TVKSATTQPSTKEAQPTP) the composition is skewed to polar residues.

This sequence belongs to the glycosyl hydrolase 37 family. In terms of assembly, monomer.

The protein resides in the periplasm. It carries out the reaction alpha,alpha-trehalose + H2O = alpha-D-glucose + beta-D-glucose. In terms of biological role, provides the cells with the ability to utilize trehalose at high osmolarity by splitting it into glucose molecules that can subsequently be taken up by the phosphotransferase-mediated uptake system. The chain is Periplasmic trehalase from Shigella flexneri serotype 5b (strain 8401).